Here is a 274-residue protein sequence, read N- to C-terminus: Thiamine kinase (274 aa).

This sequence belongs to the thiamine kinase family.

The catalysed reaction is thiamine + ATP = thiamine phosphate + ADP + H(+). It functions in the pathway cofactor biosynthesis; thiamine diphosphate biosynthesis; thiamine phosphate from thiamine: step 1/1. Functionally, catalyzes the ATP-dependent phosphorylation of thiamine to thiamine phosphate. Is involved in thiamine salvage. This is Thiamine kinase from Escherichia coli O81 (strain ED1a).